The chain runs to 344 residues: NADH-ubiquinone oxidoreductase chain 2 (344 aa).

11 helical membrane passes run 1–21 (MNPLALTIFLLSLAIGTTITL), 24–44 (FHWLLAWIGLEINTLAIIPLM), 59–79 (YFLTQAAASALVLFSSLISAW), 94–114 (MNILSIALMMKLGLAPLHFWI), 121–141 (ISLPTGLILSTWQKIAPMALL), 150–170 (LNLTIALGLTSIMVGGWGGIG), 177–197 (IMAFSSIGHLGWIIVILKFDP), 201–221 (LLNFVLYIIMTAAMFMSLTTI), 245–265 (LILLSLAGLPPLTGFTPKLLI), 273–293 (NATLLAVMVMFISLLALFFYI), and 324–344 (TAIMNTMALILLPITPTLLLL).

It belongs to the complex I subunit 2 family.

The protein localises to the mitochondrion inner membrane. The catalysed reaction is a ubiquinone + NADH + 5 H(+)(in) = a ubiquinol + NAD(+) + 4 H(+)(out). Functionally, core subunit of the mitochondrial membrane respiratory chain NADH dehydrogenase (Complex I) that is believed to belong to the minimal assembly required for catalysis. Complex I functions in the transfer of electrons from NADH to the respiratory chain. The immediate electron acceptor for the enzyme is believed to be ubiquinone. This chain is NADH-ubiquinone oxidoreductase chain 2 (MT-ND2), found in Aquarana catesbeiana (American bullfrog).